A 352-amino-acid polypeptide reads, in one-letter code: NADP-dependent isopropanol dehydrogenase (352 aa).

Zn(2+) is bound by residues cysteine 37, histidine 59, and aspartate 150. NADP(+) is bound by residues isoleucine 175–valine 178, glycine 198–arginine 200, tyrosine 218, valine 265–tyrosine 267, and lysine 340.

The protein belongs to the zinc-containing alcohol dehydrogenase family. Homotetramer. Zn(2+) is required as a cofactor.

The catalysed reaction is propan-2-ol + NADP(+) = acetone + NADPH + H(+). Alcohol dehydrogenase with a preference for medium chain secondary alcohols, such as 2-butanol and isopropanol. Has very low activity with primary alcohols, such as ethanol. Under physiological conditions, the enzyme reduces aldehydes and 2-ketones to produce secondary alcohols. Is also active with acetaldehyde and propionaldehyde. This is NADP-dependent isopropanol dehydrogenase (adh) from Thermoanaerobacter brockii (Thermoanaerobium brockii).